Here is a 1479-residue protein sequence, read N- to C-terminus: Peroxidasin homolog (1479 aa).

Residues 1–26 form the signal peptide; the sequence is MAKRSRGPGRRCLLALVLFCAWGTLA. The region spanning 27-63 is the LRRNT domain; the sequence is VVAQKPGAGCPSRCLCFRTTVRCMHLLLEAVPAVAPQ. 2 disulfides stabilise this stretch: Cys36-Cys42 and Cys40-Cys49. LRR repeat units lie at residues 61–84, 85–108, 110–132, 133–156, 157–180, and 182–204; these read APQTSILDLRFNRIREIQPGAFRR, LRNLNTLLLNNNQIKRIPSGAFED, ENLKYLYLYKNEIQSIDRQAFKG, LASLEQLYLHFNQIETLDPDSFQH, LPKLERLFLHNNRITHLVPGTFNH, and ESMKRLRLDSNTLHCDCEILWLA. The LRRCT domain maps to 192 to 244; sequence NTLHCDCEILWLADLLKTYAESGNAQAAAICEYPRRIQGRSVATITPEELNCE. 6 cysteine pairs are disulfide-bonded: Cys196-Cys243, Cys198-Cys222, Cys267-Cys317, Cys363-Cys412, Cys454-Cys502, and Cys546-Cys594. Ig-like C2-type domains are found at residues 246–332, 342–428, 433–520, and 521–610; these read PRIT…QEVT, PTFV…AFII, PQFT…LTVQ, and PRVT…MVLS. 4 N-linked (GlcNAc...) asparagine glycosylation sites follow: Asn640, Asn699, Asn719, and Asn731. 4 cysteine pairs are disulfide-bonded: Cys723–Cys885, Cys732–Cys748, Cys847–Cys857, and Cys851–Cys875. Residue Asp826 participates in heme b binding. His827 functions as the Proton acceptor in the catalytic mechanism. Residue Asp828 coordinates Ca(2+). Asn865 is a glycosylation site (N-linked (GlcNAc...) asparagine). Thr907, Tyr909, Asp911, and Ser913 together coordinate Ca(2+). Residues Cys959 and Cys970 are joined by a disulfide bond. Asn964 carries N-linked (GlcNAc...) asparagine glycosylation. Glu980 and His1074 together coordinate heme b. The stretch at 1151-1175 is one LRR 7 repeat; it reads ALDLAAINIQRGRDHGIPPYHDYRV. Tyr1176 bears the Phosphotyrosine mark. 2 disulfide bridges follow: Cys1177-Cys1234 and Cys1275-Cys1301. An N-linked (GlcNAc...) asparagine glycan is attached at Asn1178. Phosphoserine is present on Ser1180. An LRR 8 repeat occupies 1270 to 1291; it reads LARILCDNADNITRVQSDVFRV. 3 N-linked (GlcNAc...) asparagine glycosylation sites follow: Asn1280, Asn1368, and Asn1425. A required in homotrimerization region spans residues 1315-1411; it reads CCEDCRTRGQ…QIKKLESRLS (97 aa). The interval 1342–1380 is disordered; the sequence is YQEDKPTKKTRPRKIPSVGRQGEHLSNSTSAFSTRSDAS. Polar residues predominate over residues 1365 to 1380; the sequence is HLSNSTSAFSTRSDAS. The 59-residue stretch at 1413 to 1471 folds into the VWFC domain; the sequence is TECVDAGGESHANNTKWKKDACTICECKDGQVTCFVEACPPATCAVPVNIPGACCPVCL.

The protein belongs to the peroxidase family. XPO subfamily. Homotrimer; disulfide-linked. The homotrimer form is predominant. Homooligomer; disulfide-linked. Oligomerization occurs intracellularly before C-terminal proteolytic cleavage. Interacts with PXDNL; this interaction inhibits the peroxidase activity of PXDN. Requires Ca(2+) as cofactor. It depends on heme b as a cofactor. Post-translationally, glycosylated. Four sites are completely N-glycosylated (Asn-640, Asn-731, Asn-865 and Asn-1425), whereas the others are found partially glycosylated. In terms of processing, processed by FURIN and the proteolytic processing largely depends on the peroxidase activity of PXDN. The proteolytic cleavage occurs after intracellular homotrimerization and releases into the extracellular matrix a large, catalytically active fragment and a smaller fragment consisting primarily of the C-terminal VWFC domain. The processing enhances both peroxidase activity and sulfilimine cross-links formation. As to expression, expressed at higher levels in heart, lung, ovary, spleen, intestine and placenta, and at lower levels in liver, colon, pancreas, kidney, thymus, skeletal muscle and prostate. Expressed in tumors such as melanoma, breast cancer, ovarian cancer and glioblastoma. A shorter form probably lacking the signal sequence is found in testis and in EB1 cells undergoing p53/TP53-dependent apoptosis.

The protein resides in the secreted. It is found in the extracellular space. It localises to the extracellular matrix. Its subcellular location is the endoplasmic reticulum. The protein localises to the cell surface. The protein resides in the basement membrane. The catalysed reaction is L-lysyl-[collagen] + L-methionyl-[collagen] + H2O2 = [collagen]-L-lysyl-N-S-L-methionyl-[collagen] + 2 H2O + H(+). The enzyme catalyses bromide + H2O2 = hypobromite + H2O. It carries out the reaction L-lysyl-[collagen] + L-methionyl-[collagen] + hypobromite = [collagen]-L-lysyl-N-S-L-methionyl-[collagen] + bromide + H2O + H(+). It catalyses the reaction L-tyrosyl-[protein] + bromide + H2O2 + H(+) = 3-bromo-L-tyrosyl-[protein] + 2 H2O. The catalysed reaction is hypobromite + L-tyrosyl-[protein] + H(+) = 3-bromo-L-tyrosyl-[protein] + H2O. With respect to regulation, the hypobromous acid formation is activated by increasing nitrite concentrations and inhibited by increasing urate concentrations. Functionally, catalyzes the two-electron oxidation of bromide by hydrogen peroxide and generates hypobromite as a reactive intermediate which mediates the formation of sulfilimine cross-links between methionine and hydroxylysine residues within an uncross-linked collagen IV/COL4A1 NC1 hexamer. In turns, directly contributes to the collagen IV network-dependent fibronectin/FN and laminin assembly, which is required for full extracellular matrix (ECM)-mediated signaling. Thus, sulfilimine cross-links are essential for growth factor-induced cell proliferation and survival in endothelial cells, an event essential to basement membrane integrity. In addition, through the bromide oxidation, may promote tubulogenesis and induce angiogenesis through ERK1/2, Akt, and FAK pathways. Moreover brominates alpha2 collagen IV chain/COL4A2 at 'Tyr-1485' and leads to bromine enrichment of the basement membranes. In vitro, can also catalyze the two-electron oxidation of thiocyanate and iodide and these two substrates could effectively compete with bromide and thus inhibit the formation of sulfilimine bonds. Binds laminins. May play a role in the organization of eyeball structure and lens development during eye development. In Homo sapiens (Human), this protein is Peroxidasin homolog.